Here is a 74-residue protein sequence, read N- to C-terminus: uncharacterized protein (74 aa).

This is an uncharacterized protein from Treponema pallidum (strain Nichols).